Here is a 145-residue protein sequence, read N- to C-terminus: Probable low molecular weight protein-tyrosine-phosphatase EpsP (145 aa).

Cys-9 serves as the catalytic Nucleophile. The active site involves Arg-15. Residue Asp-114 is the Proton donor of the active site.

It belongs to the low molecular weight phosphotyrosine protein phosphatase family.

It carries out the reaction O-phospho-L-tyrosyl-[protein] + H2O = L-tyrosyl-[protein] + phosphate. It functions in the pathway glycan metabolism; exopolysaccharide biosynthesis. May be involved in assembly or function of the EPS I polymerization/export complex and/or the EpsB ATPase. Alternatively it may function in the removal of the terminal phosphate from C55-isoprenyl pyrophosphate in order to recycle the C55-isoprenyl phosphate lipid carrier used in the synthesis of polysaccharide repeat units. In Ralstonia solanacearum (Pseudomonas solanacearum), this protein is Probable low molecular weight protein-tyrosine-phosphatase EpsP (epsP).